The primary structure comprises 292 residues: GTP cyclohydrolase FolE2 (292 aa).

It belongs to the GTP cyclohydrolase IV family.

The catalysed reaction is GTP + H2O = 7,8-dihydroneopterin 3'-triphosphate + formate + H(+). Its pathway is cofactor biosynthesis; 7,8-dihydroneopterin triphosphate biosynthesis; 7,8-dihydroneopterin triphosphate from GTP: step 1/1. Converts GTP to 7,8-dihydroneopterin triphosphate. The chain is GTP cyclohydrolase FolE2 from Staphylococcus carnosus (strain TM300).